We begin with the raw amino-acid sequence, 485 residues long: Serine/threonine-protein kinase dst4 (485 aa).

A Protein kinase domain is found at 21–278; it reads FRVLEVIGQG…AVDLLNHPFI (258 aa). ATP is bound by residues 27–35 and lysine 50; that span reads IGQGSFGVV. The Proton acceptor role is filled by aspartate 142. 3 disordered regions span residues 304-343, 360-424, and 436-485; these read RRKK…SAGL, VMRE…GSVV, and SMKL…NQDD. The segment covering 310 to 324 has biased composition (acidic residues); the sequence is EEEAEEAEEGDDYDD. The span at 370–393 shows a compositional bias: low complexity; the sequence is SNNGGTFIYNNNNNNSSKTSSSGT. Acidic residues-rich tracts occupy residues 406–417 and 450–468; these read DDDDDDDIEEGG and SSDE…EEGG. Residues 474–485 are compositionally biased toward polar residues; that stretch reads VVYTKSPVNQDD.

Belongs to the protein kinase superfamily. STE Ser/Thr protein kinase family. STE20 subfamily. It depends on Mg(2+) as a cofactor.

It carries out the reaction L-seryl-[protein] + ATP = O-phospho-L-seryl-[protein] + ADP + H(+). The enzyme catalyses L-threonyl-[protein] + ATP = O-phospho-L-threonyl-[protein] + ADP + H(+). This chain is Serine/threonine-protein kinase dst4, found in Dictyostelium discoideum (Social amoeba).